The chain runs to 201 residues: MKPVTCCNQKNNIMPSLVPVCCSEKKIESDAKKSISKCCGDKEIYDSENRPITKEDGSWIPGSCKQCRSDPHSRNFCQSLSNKCSSSSFSSNSALSPDLNEQQTDVNYNSIKLPEICSCKNAQMNAASDAKRYLPISYTYQKIRQHMQKNKSIQEQLNPEDSTSISSALENIASGLHVRGQKVELQSIKDALHKMDKNVLE.

In terms of assembly, interacts with the chaperones HSP82 and HSC82.

This is an uncharacterized protein from Saccharomyces cerevisiae (strain ATCC 204508 / S288c) (Baker's yeast).